A 447-amino-acid polypeptide reads, in one-letter code: Serine/threonine-protein phosphatase 2A 55 kDa regulatory subunit B gamma isoform (447 aa).

WD repeat units lie at residues 22-61 (TPADIISTVEFNHTGELLATGDKGGRVVIFQREPESKNAP), 87-128 (EIEE…KRPE), 171-209 (GHTYHINSISVNSDCETYMSADDLRINLWHLAITDRSFN), 220-260 (DLTE…LCDK), 279-317 (EIISSVSDVKFSHSGRYMLTRDYLTVKVWDLNMEARPIE), 334-375 (ENDC…DVTL), and 410-446 (DFTKKILHTAWHPAENIIAIAATNNLYIFQDKVNSDM).

The protein belongs to the phosphatase 2A regulatory subunit B family. PP2A consists of a common heterodimeric core enzyme, composed of a 36 kDa catalytic subunit (subunit C) and a 65 kDa constant regulatory subunit (PR65 or subunit A), that associates with a variety of regulatory subunits. Proteins that associate with the core dimer include three families of regulatory subunits B (the R2/B/PR55/B55, R3/B''/PR72/PR130/PR59 and R5/B'/B56 families), the 48 kDa variable regulatory subunit, viral proteins, and cell signaling molecules. Interacts with IER5.

Functionally, the B regulatory subunit might modulate substrate selectivity and catalytic activity, and might also direct the localization of the catalytic enzyme to a particular subcellular compartment. This chain is Serine/threonine-protein phosphatase 2A 55 kDa regulatory subunit B gamma isoform (PPP2R2C), found in Macaca fascicularis (Crab-eating macaque).